The primary structure comprises 77 residues: Dermatoxin-A1 (77 aa).

The N-terminal stretch at 1 to 22 (MAFLKKSLFLVLFLGLVPLFLC) is a signal peptide. The propeptide occupies 23-42 (ENEKREGENEKEENDDQSEE). At glutamine 76 the chain carries Glutamine amide.

Belongs to the frog skin active peptide (FSAP) family. Dermatoxin subfamily. In terms of tissue distribution, expressed by the skin glands.

It localises to the secreted. Its function is as follows. Possesses a potent antimicrobial activity against Gram-positive and Gram-negative bacteria. Probably acts by disturbing membrane functions with its amphipathic structure. The sequence is that of Dermatoxin-A1 from Agalychnis annae (Blue-sided leaf frog).